Here is a 316-residue protein sequence, read N- to C-terminus: MKNFALIGAAGYIAPRHMRAIKDTGNCLVSAYDINDSVGIIDSISPQSEFFTEFEFFLDHASNLKRDSATALDYVSICSPNYLHYPHIAAGLRLGCDVICEKPLVPTPEMLDQLAVIERETDKRLYNILQLRHHQAIIALKDKVAREKSPHKYEVDLTYITSRGNWYLKSWKGDPRKSFGVATNIGVHFYDMLHFIFGKLQRNVVHFTSEYKAAGYLEYEQARVRWFLSVDANDLPESVKGKKPTYRSITVNGEEMEFSEGFTDLHTTSYEEILAGRGYGIDDARHCVETVNTIRSAVIVPASDNEGHPFVAALAR.

Residues 11–13 (GYI), 32–37 (YDINDS), glutamate 55, 81–84 (NYLH), 101–102 (EK), glutamine 130, and 171–172 (WK) contribute to the NAD(+) site.

It belongs to the Gfo/Idh/MocA family. Homotetramer.

It catalyses the reaction UDP-2-acetamido-2-deoxy-alpha-D-glucuronate + NAD(+) = UDP-2-acetamido-2-deoxy-alpha-D-ribo-hex-3-uluronate + NADH + H(+). It carries out the reaction 2-hydroxyglutarate + NAD(+) = 2-oxoglutarate + NADH + H(+). It participates in bacterial outer membrane biogenesis; LPS O-antigen biosynthesis. Its function is as follows. Plays a role in the biosynthesis of B-band O antigen for serotype O5. Catalyzes the NAD-dependent oxidation of UDP-N-acetylglucosaminuronic acid (UDP-D-GlcNAcA) to UDP-2-acetamido-2-deoxy-3-oxo-D-glucuronic acid (UDP-3-oxo-D-GlcNAcA). Cannot use UDP-GlcNAc or UDP-GalNAc as the nucleotide sugar substrate, and can use only poorly UDP-D-glucuronic acid (UDP-GlcA). Undergoes an NAD(+) recycling mechanism using 2-oxoglutarate as an oxidant. In Pseudomonas aeruginosa (strain ATCC 15692 / DSM 22644 / CIP 104116 / JCM 14847 / LMG 12228 / 1C / PRS 101 / PAO1), this protein is UDP-N-acetyl-2-amino-2-deoxy-D-glucuronate oxidase.